The chain runs to 154 residues: Ribosome maturation factor RimP (154 aa).

It belongs to the RimP family.

The protein localises to the cytoplasm. Its function is as follows. Required for maturation of 30S ribosomal subunits. This is Ribosome maturation factor RimP from Flavobacterium psychrophilum (strain ATCC 49511 / DSM 21280 / CIP 103535 / JIP02/86).